The following is a 260-amino-acid chain: UPF0246 protein Veis_4789 (260 aa).

It belongs to the UPF0246 family.

The chain is UPF0246 protein Veis_4789 from Verminephrobacter eiseniae (strain EF01-2).